Reading from the N-terminus, the 438-residue chain is Protein ROOT INITIATION DEFECTIVE 3 (438 aa).

WD repeat units follow at residues 36–74 (AHGL…AEVK), 76–115 (YPVE…LLKK), 118–157 (GHYR…DDFQ), 171–212 (EHTM…LLKN), 214–253 (IFPS…EYGT), and 261–300 (EKGK…HVRT). Residues 394 to 434 (AATEMEMERLKLEYKRSLQMNEQWQKNYENLLQVVMEEEQI) adopt a coiled-coil conformation.

Involved in meristem development. Acts as a negative regulator of the CUC-STM pathway in shoot apical meristem (SAM) neo-formation. This Arabidopsis thaliana (Mouse-ear cress) protein is Protein ROOT INITIATION DEFECTIVE 3 (RID3).